The chain runs to 92 residues: MARTVNCVYLNKEADGLDFQLYPGDLGKRIFDNISKEAWGLWQKKQTMLINEKKLNMMNVDDRKFLEEQMTSFLFEGKDVEIEGFVPEKDQD.

It belongs to the Fe(2+)-trafficking protein family.

Its function is as follows. Could be a mediator in iron transactions between iron acquisition and iron-requiring processes, such as synthesis and/or repair of Fe-S clusters in biosynthetic enzymes. This Shewanella sp. (strain W3-18-1) protein is Probable Fe(2+)-trafficking protein.